The following is a 422-amino-acid chain: Elongation factor 1-alpha (422 aa).

The tr-type G domain maps to 5–221 (KPHQNLAVIG…NDLPEPQPPT (217 aa)). Residues 14–21 (GHVDHGKS) are G1. 14–21 (GHVDHGKS) is a binding site for GTP. Serine 21 contributes to the Mg(2+) binding site. The G2 stretch occupies residues 70 to 74 (GVTID). Positions 91–94 (DCPG) are G3. GTP contacts are provided by residues 91-95 (DCPGH) and 146-149 (NKMD). Residues 146–149 (NKMD) form a G4 region. The G5 stretch occupies residues 185–187 (SAF).

The protein belongs to the TRAFAC class translation factor GTPase superfamily. Classic translation factor GTPase family. EF-Tu/EF-1A subfamily.

The protein localises to the cytoplasm. The catalysed reaction is GTP + H2O = GDP + phosphate + H(+). Its function is as follows. GTP hydrolase that promotes the GTP-dependent binding of aminoacyl-tRNA to the A-site of ribosomes during protein biosynthesis. This chain is Elongation factor 1-alpha, found in Natronomonas pharaonis (strain ATCC 35678 / DSM 2160 / CIP 103997 / JCM 8858 / NBRC 14720 / NCIMB 2260 / Gabara) (Halobacterium pharaonis).